A 175-amino-acid polypeptide reads, in one-letter code: ATP synthase subunit b (175 aa).

Residues 20–40 (LIFWTAVTFVIVLVILKKIAW) form a helical membrane-spanning segment.

This sequence belongs to the ATPase B chain family. In terms of assembly, F-type ATPases have 2 components, F(1) - the catalytic core - and F(0) - the membrane proton channel. F(1) has five subunits: alpha(3), beta(3), gamma(1), delta(1), epsilon(1). F(0) has four main subunits: a(1), b(2) and c(10-14). The alpha and beta chains form an alternating ring which encloses part of the gamma chain. F(1) is attached to F(0) by a central stalk formed by the gamma and epsilon chains, while a peripheral stalk is formed by the delta and b chains.

The protein resides in the cell inner membrane. In terms of biological role, f(1)F(0) ATP synthase produces ATP from ADP in the presence of a proton or sodium gradient. F-type ATPases consist of two structural domains, F(1) containing the extramembraneous catalytic core and F(0) containing the membrane proton channel, linked together by a central stalk and a peripheral stalk. During catalysis, ATP synthesis in the catalytic domain of F(1) is coupled via a rotary mechanism of the central stalk subunits to proton translocation. Component of the F(0) channel, it forms part of the peripheral stalk, linking F(1) to F(0). This Chlorobaculum parvum (strain DSM 263 / NCIMB 8327) (Chlorobium vibrioforme subsp. thiosulfatophilum) protein is ATP synthase subunit b.